Here is a 305-residue protein sequence, read N- to C-terminus: Mas-related G-protein coupled receptor member A2B (305 aa).

Over 1-17 the chain is Extracellular; the sequence is MDETLPGSINIRILIPK. Residues 18 to 38 traverse the membrane as a helical segment; that stretch reads LMIIIFGLVGLMGNAIVFWLL. Residues 39–53 lie on the Cytoplasmic side of the membrane; sequence GFHLRRNAFSVYILN. Residues 54 to 74 form a helical membrane-spanning segment; the sequence is LALADFLFLLSSIIASTLFLL. Residues 75–78 lie on the Extracellular side of the membrane; that stretch reads KVSY. Residues 79 to 99 traverse the membrane as a helical segment; that stretch reads LSIIFHLCFNTIMMVVYITGI. The Cytoplasmic portion of the chain corresponds to 100–132; that stretch reads SMLSAISTECCLSVLCPTWYRCHRPVHTSTVMC. A helical membrane pass occupies residues 133–153; that stretch reads AVIWVLSLLICILNSYFCAVL. Over 154–167 the chain is Extracellular; sequence HTRYDNDNECLATN. The chain crosses the membrane as a helical span at residues 168-188; sequence IFTASYMIFLLVVLCLSSLAL. At 189–207 the chain is on the cytoplasmic side; the sequence is LARLFCGAGQMKLTRFHVT. A helical membrane pass occupies residues 208-228; the sequence is ILLTLLVFLLCGLPFVIYCIL. Over 229–244 the chain is Extracellular; the sequence is LFKIKDDFHVLDVNFY. A helical transmembrane segment spans residues 245 to 265; it reads LALEVLTAINSCANPIIYFFV. The Cytoplasmic portion of the chain corresponds to 266-305; the sequence is GSFRHQLKHQTLKMVLQSALQDTPETAENMVEMSSNKAEP.

The protein belongs to the G-protein coupled receptor 1 family. Mas subfamily. In terms of tissue distribution, expressed in a subset of sensory neurons that includes nociceptors. Expressed in the subclass of non-peptidergic sensory neurons that are IB4(+) and VR1(-).

The protein resides in the cell membrane. Functionally, orphan receptor. May be a receptor for RFamide-family neuropeptides such as NPFF and NPAF, which are analgesic in vivo. May regulate nociceptor function and/or development, including the sensation or modulation of pain. The sequence is that of Mas-related G-protein coupled receptor member A2B from Mus musculus (Mouse).